The sequence spans 359 residues: Peptide chain release factor 1 (359 aa).

Residue Gln235 is modified to N5-methylglutamine. The interval 282–306 is disordered; that stretch reads RQRADSERSADRKSQVGSGDRSERI.

It belongs to the prokaryotic/mitochondrial release factor family. Post-translationally, methylated by PrmC. Methylation increases the termination efficiency of RF1.

The protein resides in the cytoplasm. In terms of biological role, peptide chain release factor 1 directs the termination of translation in response to the peptide chain termination codons UAG and UAA. The polypeptide is Peptide chain release factor 1 (Rhizobium rhizogenes (strain K84 / ATCC BAA-868) (Agrobacterium radiobacter)).